Reading from the N-terminus, the 275-residue chain is Large ribosomal subunit protein uL2 (275 aa).

Positions 223–275 are disordered; the sequence is VAMNPVDHPHGGGEGRTSGGRHPVTPWGVPTKGYKTRSNKRTDKYIVRRRNKK.

It belongs to the universal ribosomal protein uL2 family. As to quaternary structure, part of the 50S ribosomal subunit. Forms a bridge to the 30S subunit in the 70S ribosome.

Functionally, one of the primary rRNA binding proteins. Required for association of the 30S and 50S subunits to form the 70S ribosome, for tRNA binding and peptide bond formation. It has been suggested to have peptidyltransferase activity; this is somewhat controversial. Makes several contacts with the 16S rRNA in the 70S ribosome. The sequence is that of Large ribosomal subunit protein uL2 from Shewanella loihica (strain ATCC BAA-1088 / PV-4).